The primary structure comprises 1897 residues: 1,3-beta-glucan synthase component FKS1 (1897 aa).

The disordered stretch occupies residues 1–106 (MSGYPAGHYE…SETFSDFTMR (106 aa)). Residues 8–29 (HYEDGYGHQEHGGDAYYQDEHG) are compositionally biased toward basic and acidic residues. Residues 74–83 (GDQYYDQGNG) show a composition bias toward low complexity. Transmembrane regions (helical) follow at residues 487–507 (IWVIHLGAFWFFTAYNAPTLY), 525–545 (WSAVGFGGALVGLIQILATLC), 564–584 (LMFLIAVFIVNLAPGVVVFGF), 591–611 (TICLIIGIVHFFIALATFFFF), 655–675 (LWICVFGAKLVESYFFLTLSL), 707–727 (ILLGLMMFMDLTLFFLDSYLW), 728–748 (YVICNTIFSVARSFYLGVSIW), 1329–1349 (NMFIMLSVQMFMIVLINLGAL), 1386–1406 (CVVSIFIVFFISFVPLAVQEL), 1473–1493 (FAGPSIYAGSRLLLMLLFATS), 1497–1517 (TPALIWFWVSLLALCISPFLF), 1588–1608 (IFFSEIIAPLVQVAVTLVPYL), 1630–1650 (IAIVAFGPIGVNAGVSGMFFG), 1666–1686 (FGAVLAAIAHAIAVIILLVIF), 1701–1721 (VLGMISAAAIQRFIYKLIISL), 1766–1786 (FSADFVLGHILLFVMLPALCI), and 1826–1846 (FAILYFTMLVLFLILLIAPLV).

The protein belongs to the glycosyltransferase 48 family. In terms of assembly, component of the 1,3-beta-glucan synthase (GS) complex composed of a catalytic subunit fksA and a regulatory subunit.

Its subcellular location is the mitochondrion. The protein localises to the cell membrane. The enzyme catalyses [(1-&gt;3)-beta-D-glucosyl](n) + UDP-alpha-D-glucose = [(1-&gt;3)-beta-D-glucosyl](n+1) + UDP + H(+). Its function is as follows. Catalytic subunit of the 1,3-beta-glucan synthase. Synthesizes 1,3-beta-glucan, a major structural component of the fungal cell wall. Involved in cell wall synthesis, maintenance and remodeling. The sequence is that of 1,3-beta-glucan synthase component FKS1 from Aspergillus niger (strain ATCC MYA-4892 / CBS 513.88 / FGSC A1513).